A 137-amino-acid polypeptide reads, in one-letter code: Small ribosomal subunit protein uS12 (137 aa).

A disordered region spans residues 1–57 (MPTINQLVRKPRKSKVEKSKSPALNVGYNSLKRVPTNESAPQKRGVATRVGTMTPKK). A 3-methylthioaspartic acid modification is found at aspartate 102.

Belongs to the universal ribosomal protein uS12 family. In terms of assembly, part of the 30S ribosomal subunit. Contacts proteins S8 and S17. May interact with IF1 in the 30S initiation complex.

Functionally, with S4 and S5 plays an important role in translational accuracy. In terms of biological role, interacts with and stabilizes bases of the 16S rRNA that are involved in tRNA selection in the A site and with the mRNA backbone. Located at the interface of the 30S and 50S subunits, it traverses the body of the 30S subunit contacting proteins on the other side and probably holding the rRNA structure together. The combined cluster of proteins S8, S12 and S17 appears to hold together the shoulder and platform of the 30S subunit. The protein is Small ribosomal subunit protein uS12 of Streptococcus gordonii (strain Challis / ATCC 35105 / BCRC 15272 / CH1 / DL1 / V288).